A 419-amino-acid chain; its full sequence is L-rhamnose isomerase (419 aa).

Positions 262, 294, and 296 each coordinate Mn(2+).

This sequence belongs to the rhamnose isomerase family. Homotetramer. Requires Mn(2+) as cofactor.

It localises to the cytoplasm. It catalyses the reaction L-rhamnopyranose = L-rhamnulose. It participates in carbohydrate degradation; L-rhamnose degradation; glycerone phosphate from L-rhamnose: step 1/3. Its function is as follows. Catalyzes the interconversion of L-rhamnose and L-rhamnulose. The protein is L-rhamnose isomerase of Escherichia coli O6:H1 (strain CFT073 / ATCC 700928 / UPEC).